Reading from the N-terminus, the 501-residue chain is Zinc finger protein 704 (501 aa).

The segment covering 80–96 has biased composition (polar residues); it reads SLKSTCNGGQRDGLTQG. Disordered stretches follow at residues 80 to 138, 183 to 203, and 216 to 267; these read SLKS…HTRS, PLVR…WKDG, and WSWS…LFDE. Residues 115–137 show a composition bias toward basic and acidic residues; it reads EEPRVLEHKRTGRALETEKDHTR. The C2H2-type zinc finger occupies 281–306; sequence FKCLWKNCGKVLSTAAGIQRHIRTVH. Disordered regions lie at residues 340-380, 398-419, 427-446, and 453-472; these read SLSP…SRSA, PVTI…FSIS, FTGT…GEQH, and LSSP…GEGK. Positions 368–380 are enriched in low complexity; it reads SESSSSTPLSRSA. Residues 472–476 carry the CR1 motif; that stretch reads KKCRK. A CR2 motif is present at residues 490-494; sequence CRWKK.

The protein resides in the nucleus. Functionally, transcription factor. The sequence is that of Zinc finger protein 704 (znf704) from Danio rerio (Zebrafish).